A 182-amino-acid polypeptide reads, in one-letter code: Small ribosomal subunit protein uS4c (182 aa).

Residues 82 to 143 (MRLDNILFRL…KQRSKALIQN (62 aa)) form the S4 RNA-binding domain.

The protein belongs to the universal ribosomal protein uS4 family. Part of the 30S ribosomal subunit. Contacts protein S5. The interaction surface between S4 and S5 is involved in control of translational fidelity.

The protein resides in the plastid. Its subcellular location is the chloroplast. Functionally, one of the primary rRNA binding proteins, it binds directly to 16S rRNA where it nucleates assembly of the body of the 30S subunit. With S5 and S12 plays an important role in translational accuracy. The protein is Small ribosomal subunit protein uS4c (rps4) of Libertia formosa (Snowy mermaid).